We begin with the raw amino-acid sequence, 159 residues long: Cyclic pyranopterin monophosphate synthase (159 aa).

Residues 74–76 and 112–113 each bind substrate; these read MCH and ME. D127 is an active-site residue.

The protein belongs to the MoaC family. Homohexamer; trimer of dimers.

The enzyme catalyses (8S)-3',8-cyclo-7,8-dihydroguanosine 5'-triphosphate = cyclic pyranopterin phosphate + diphosphate. It functions in the pathway cofactor biosynthesis; molybdopterin biosynthesis. Catalyzes the conversion of (8S)-3',8-cyclo-7,8-dihydroguanosine 5'-triphosphate to cyclic pyranopterin monophosphate (cPMP). This is Cyclic pyranopterin monophosphate synthase from Helicobacter hepaticus (strain ATCC 51449 / 3B1).